A 166-amino-acid polypeptide reads, in one-letter code: Cofilin-2 (166 aa).

A2 bears the N-acetylalanine mark. At S3 the chain carries Phosphoserine. In terms of domain architecture, ADF-H spans 4-153; sequence GVTVNDEVIK…KDRSTLGEKL (150 aa). Position 6 is a phosphothreonine (T6). The Nuclear localization signal signature appears at 30–34; sequence KKRKK.

It belongs to the actin-binding proteins ADF family. Interacts with CSRP3; possibly two molecules of CFL2 can interact with one molecule if CSRP3. Post-translationally, the phosphorylation of Ser-24 may prevent recognition of the nuclear localization signal. Predominantly expressed in skeletal muscle.

Its subcellular location is the nucleus matrix. The protein localises to the cytoplasm. The protein resides in the cytoskeleton. In terms of biological role, controls reversibly actin polymerization and depolymerization in a pH-sensitive manner. It has the ability to bind G- and F-actin in a 1:1 ratio of cofilin to actin. It is the major component of intranuclear and cytoplasmic actin rods. Required for muscle maintenance. May play a role during the exchange of alpha-actin forms during the early postnatal remodeling of the sarcomere. This chain is Cofilin-2 (Cfl2), found in Mus musculus (Mouse).